The following is a 416-amino-acid chain: UDP-N-acetylglucosamine 1-carboxyvinyltransferase (416 aa).

A phosphoenolpyruvate-binding site is contributed by 22–23 (KN). Arg-92 is a UDP-N-acetyl-alpha-D-glucosamine binding site. Catalysis depends on Cys-116, which acts as the Proton donor. Cys-116 bears the 2-(S-cysteinyl)pyruvic acid O-phosphothioketal mark. Residues 121-125 (RPVDQ), Asp-304, and Ile-326 each bind UDP-N-acetyl-alpha-D-glucosamine.

It belongs to the EPSP synthase family. MurA subfamily.

The protein localises to the cytoplasm. It carries out the reaction phosphoenolpyruvate + UDP-N-acetyl-alpha-D-glucosamine = UDP-N-acetyl-3-O-(1-carboxyvinyl)-alpha-D-glucosamine + phosphate. It functions in the pathway cell wall biogenesis; peptidoglycan biosynthesis. Its function is as follows. Cell wall formation. Adds enolpyruvyl to UDP-N-acetylglucosamine. This is UDP-N-acetylglucosamine 1-carboxyvinyltransferase from Cupriavidus necator (strain ATCC 17699 / DSM 428 / KCTC 22496 / NCIMB 10442 / H16 / Stanier 337) (Ralstonia eutropha).